Here is a 288-residue protein sequence, read N- to C-terminus: Undecaprenyl-diphosphatase (288 aa).

8 consecutive transmembrane segments (helical) span residues G25–L45, F53–Y73, W93–L113, L121–I141, V171–V191, S196–L216, G231–I251, and F263–V283.

The protein belongs to the UppP family.

It localises to the cell membrane. It carries out the reaction di-trans,octa-cis-undecaprenyl diphosphate + H2O = di-trans,octa-cis-undecaprenyl phosphate + phosphate + H(+). Its function is as follows. Catalyzes the dephosphorylation of undecaprenyl diphosphate (UPP). Confers resistance to bacitracin. This Streptococcus thermophilus (strain ATCC BAA-250 / LMG 18311) protein is Undecaprenyl-diphosphatase.